A 201-amino-acid polypeptide reads, in one-letter code: Dephospho-CoA kinase (201 aa).

Residues 4–201 (IIGITGGIAS…LEGGRQDDRD (198 aa)) form the DPCK domain. 12 to 17 (ASGKST) lines the ATP pocket.

Belongs to the CoaE family.

Its subcellular location is the cytoplasm. It catalyses the reaction 3'-dephospho-CoA + ATP = ADP + CoA + H(+). It functions in the pathway cofactor biosynthesis; coenzyme A biosynthesis; CoA from (R)-pantothenate: step 5/5. In terms of biological role, catalyzes the phosphorylation of the 3'-hydroxyl group of dephosphocoenzyme A to form coenzyme A. This Streptococcus pneumoniae serotype 4 (strain ATCC BAA-334 / TIGR4) protein is Dephospho-CoA kinase.